The sequence spans 105 residues: Large ribosomal subunit protein uL24 (105 aa).

Belongs to the universal ribosomal protein uL24 family. Part of the 50S ribosomal subunit.

Its function is as follows. One of two assembly initiator proteins, it binds directly to the 5'-end of the 23S rRNA, where it nucleates assembly of the 50S subunit. Functionally, one of the proteins that surrounds the polypeptide exit tunnel on the outside of the subunit. In Psychrobacter cryohalolentis (strain ATCC BAA-1226 / DSM 17306 / VKM B-2378 / K5), this protein is Large ribosomal subunit protein uL24.